We begin with the raw amino-acid sequence, 38 residues long: Histone H5 (38 aa).

Positions 1–15 (TESPIPVPAPAPAAK) are enriched in pro residues. The tract at residues 1–38 (TESPIPVPAPAPAAKPKPKRVSKRPASHPPYSDMIAAA) is disordered. Residues 16 to 26 (PKPKRVSKRPA) are compositionally biased toward basic residues.

It belongs to the histone H1/H5 family. Erythroid cells.

Its subcellular location is the nucleus. The protein resides in the chromosome. Its function is as follows. Histone H5 performs the same function as H1, being necessary for the condensation of nucleosome chains into higher order structures, and replaces histone H1 in certain cells. This is Histone H5 from Columba livia (Rock dove).